A 313-amino-acid polypeptide reads, in one-letter code: Fucose-specific lectin (313 aa).

6 repeat units span residues 5–57 (FLYT…VIGE), 58–109 (AKLF…VGVK), 110–162 (VGSN…SFGS), 163–208 (TVPG…FSAS), 209–260 (ASAG…RPTP), and 261–304 (SLPD…IGAV). A 6 X approximate tandem repeats region spans residues 5-304 (FLYTSKIAAI…SGKGWSIGAV (300 aa)). Residues R25, E37, R78, E90, W98, Q102, R132, E147, and W154 each coordinate beta-L-fucose. Residues R78 and E90 each contribute to the alpha-L-fucose site. Residue Q102 coordinates alpha-L-fucose. Alpha-L-fucose is bound by residues W154, R180, and E192. Beta-L-fucose is bound at residue W200. An alpha-L-fucose-binding site is contributed by G204. Residues R227 and E239 each contribute to the beta-L-fucose site. W246 is a binding site for alpha-L-fucose. Residue W299 participates in beta-L-fucose binding.

The protein belongs to the fungal fucose-specific lectin family. Forms homodimers. The two AAL monomers are associated via interactions between N-terminal and C-terminal peptides. Tyr-7 interacts via aromatic ring stacking with its counterpart on the other monomer, whereas Ser-284 interacts via hydrogen bonding with Asp-264 on the other monomer.

Functionally, lectin that specifically binds to L-fucose. Has strongest preference for the alpha-1,6-fucosylated chain (core fucose) on glycoproteins among alpha-1,2-, alpha-1,3-, alpha-1,4-, and alpha-1,6-fucosylated chains. Might play a role in the differentiation of the fruiting body. Exhibits antifungal activity against Mucor racemosus and thus could act as an antifungal protein in natural ecosystems. This Aleuria aurantia (Orange peel mushroom) protein is Fucose-specific lectin.